The chain runs to 171 residues: Prolyl-tRNA synthetase associated domain-containing protein 1 (171 aa).

This sequence belongs to the PRORSD1 family.

This is Prolyl-tRNA synthetase associated domain-containing protein 1 (PRORSD1) from Bos taurus (Bovine).